The sequence spans 598 residues: Probable pectinesterase/pectinesterase inhibitor 34 (598 aa).

Residues 1–40 (MGYERLGPSGATGSVTTSTTTAPILNQVSTSEQPENNNRR) are disordered. Residues 7 to 23 (GPSGATGSVTTSTTTAP) show a composition bias toward low complexity. Positions 24–36 (ILNQVSTSEQPEN) are enriched in polar residues. A helical membrane pass occupies residues 46-66 (VVSSIVLAISLILAAAIFAGV). Residues 81-232 (RKPSQAISKA…SELVSNCLAI (152 aa)) are pectinesterase inhibitor 34. Residues 284–582 (DIIVSKDGNG…FTVAEFIYGS (299 aa)) form a pectinesterase 34 region. T360 and Q390 together coordinate substrate. D413 functions as the Proton donor; for pectinesterase activity in the catalytic mechanism. The cysteines at positions 427 and 447 are disulfide-linked. D434 acts as the Nucleophile; for pectinesterase activity in catalysis. R502 and W504 together coordinate substrate.

In the N-terminal section; belongs to the PMEI family. The protein in the C-terminal section; belongs to the pectinesterase family. Expressed in siliques.

The protein localises to the membrane. The enzyme catalyses [(1-&gt;4)-alpha-D-galacturonosyl methyl ester](n) + n H2O = [(1-&gt;4)-alpha-D-galacturonosyl](n) + n methanol + n H(+). The protein operates within glycan metabolism; pectin degradation; 2-dehydro-3-deoxy-D-gluconate from pectin: step 1/5. Its function is as follows. Acts in the modification of cell walls via demethylesterification of cell wall pectin. The protein is Probable pectinesterase/pectinesterase inhibitor 34 (PME34) of Arabidopsis thaliana (Mouse-ear cress).